A 488-amino-acid chain; its full sequence is Glutamyl-tRNA(Gln) amidotransferase subunit A (488 aa).

Catalysis depends on charge relay system residues lysine 77 and serine 152. Serine 176 (acyl-ester intermediate) is an active-site residue.

This sequence belongs to the amidase family. GatA subfamily. As to quaternary structure, heterotrimer of A, B and C subunits.

The catalysed reaction is L-glutamyl-tRNA(Gln) + L-glutamine + ATP + H2O = L-glutaminyl-tRNA(Gln) + L-glutamate + ADP + phosphate + H(+). Its function is as follows. Allows the formation of correctly charged Gln-tRNA(Gln) through the transamidation of misacylated Glu-tRNA(Gln) in organisms which lack glutaminyl-tRNA synthetase. The reaction takes place in the presence of glutamine and ATP through an activated gamma-phospho-Glu-tRNA(Gln). This Streptococcus pneumoniae serotype 19F (strain G54) protein is Glutamyl-tRNA(Gln) amidotransferase subunit A.